Reading from the N-terminus, the 317-residue chain is 1-phosphatidylinositol phosphodiesterase (317 aa).

The N-terminal stretch at M1 to T22 is a signal peptide. The PI-PLC X-box domain occupies L58–L196. Residue H67 is the Proton acceptor of the active site. The active-site Proton donor is H115.

In terms of assembly, monomer.

The protein resides in the secreted. Its subcellular location is the cytoplasm. The enzyme catalyses a 1,2-diacyl-sn-glycero-3-phospho-(1D-myo-inositol) = 1D-myo-inositol 1,2-cyclic phosphate + a 1,2-diacyl-sn-glycerol. Functionally, cleaves glycosylphosphatidylinositol (GPI) and phosphatidylinositol (PI) anchors but not PI phosphates. Important factor in pathogenesis, PI-PLC activity is present only in virulent listeria species. It may participate in the lysis of the phagolysosomal membrane. This is 1-phosphatidylinositol phosphodiesterase (plcA) from Listeria monocytogenes serovar 1/2a (strain ATCC BAA-679 / EGD-e).